Consider the following 1006-residue polypeptide: GATA zinc finger domain-containing protein 7 (1006 aa).

Over residues 55–70 the composition is skewed to low complexity; the sequence is SSSNNFINNHHNNQSS. Disordered regions lie at residues 55-116, 128-248, 381-499, 528-638, and 657-800; these read SSSN…APNL, PFQN…DPFY, NAKK…PLST, STSG…SSNS, and YNSN…NYHD. Over residues 71-86 the composition is skewed to polar residues; it reads DIHSISQSTPNLSTLI. Low complexity-rich tracts occupy residues 87–110 and 128–158; these read SSSS…NSSS and PFQN…CNNS. Over residues 159-168 the composition is skewed to polar residues; that stretch reads PVSSSTNYIP. A compositionally biased stretch (low complexity) spans 169 to 180; that stretch reads NNSTSNVVLNSS. The segment covering 181 to 190 has biased composition (polar residues); that stretch reads IPTTSPNVLS. Low complexity-rich tracts occupy residues 205 to 241 and 388 to 410; these read NNNN…NNNN and TNTN…NNNN. Positions 411–426 are enriched in polar residues; sequence IQQANVNTSPISTSTT. 2 stretches are compositionally biased toward low complexity: residues 427-456 and 468-496; these read PNNN…QQAQ and SITP…GASP. Residues 528–539 are compositionally biased toward polar residues; that stretch reads STSGMLSTTNPY. Low complexity predominate over residues 540-557; it reads THHSPNTSSTVSSSVTSP. Polar residues predominate over residues 558-589; the sequence is LINQYGTNPTLTNNHSFYGSLASNQNTGASDG. Composition is skewed to low complexity over residues 590–601 and 619–638; these read NNNNNNNNNNNN and SSNP…SSNS. Polar residues predominate over residues 662–680; the sequence is GSGMTTPQSLGHSPSHNDY. 2 stretches are compositionally biased toward low complexity: residues 681 to 706 and 713 to 785; these read NSNN…NSNN and SNSS…SSNN. A GATA-type zinc finger spans residues 842–867; it reads CHNCGTKNTPEWRRGPSGPATLCNAC. Positions 925-957 are disordered; sequence NNASSSSSSSSSSSSSSSSSSSTSSYSSSSYNI. Over residues 928-954 the composition is skewed to low complexity; that stretch reads SSSSSSSSSSSSSSSSSSSTSSYSSSS.

The chain is GATA zinc finger domain-containing protein 7 (gtaG) from Dictyostelium discoideum (Social amoeba).